The following is a 504-amino-acid chain: Maturase K (504 aa).

It belongs to the intron maturase 2 family. MatK subfamily.

The protein resides in the plastid. It localises to the chloroplast. Usually encoded in the trnK tRNA gene intron. Probably assists in splicing its own and other chloroplast group II introns. This is Maturase K from Actinidia deliciosa (Kiwi).